We begin with the raw amino-acid sequence, 145 residues long: uncharacterized protein (145 aa).

The next 2 helical transmembrane spans lie at 20–40 (LIGP…GMFF) and 116–136 (MIML…VLSA).

It is found in the membrane. This is an uncharacterized protein from Saccharomyces cerevisiae (strain ATCC 204508 / S288c) (Baker's yeast).